The sequence spans 330 residues: Aspartate--ammonia ligase (330 aa).

Belongs to the class-II aminoacyl-tRNA synthetase family. AsnA subfamily.

The protein localises to the cytoplasm. It catalyses the reaction L-aspartate + NH4(+) + ATP = L-asparagine + AMP + diphosphate + H(+). It functions in the pathway amino-acid biosynthesis; L-asparagine biosynthesis; L-asparagine from L-aspartate (ammonia route): step 1/1. The polypeptide is Aspartate--ammonia ligase (Edwardsiella ictaluri (strain 93-146)).